The chain runs to 82 residues: Small ribosomal subunit protein uS17 (82 aa).

The protein belongs to the universal ribosomal protein uS17 family. As to quaternary structure, part of the 30S ribosomal subunit.

In terms of biological role, one of the primary rRNA binding proteins, it binds specifically to the 5'-end of 16S ribosomal RNA. The polypeptide is Small ribosomal subunit protein uS17 (Pelobacter propionicus (strain DSM 2379 / NBRC 103807 / OttBd1)).